We begin with the raw amino-acid sequence, 459 residues long: Ribulose bisphosphate carboxylase large chain (459 aa).

Lys4 bears the N6,N6,N6-trimethyllysine mark. Positions 113 and 163 each coordinate substrate. Lys165 (proton acceptor) is an active-site residue. Residue Lys167 participates in substrate binding. Residues Lys191, Asp193, and Glu194 each coordinate Mg(2+). Residue Lys191 is modified to N6-carboxylysine. His284 (proton acceptor) is an active-site residue. Residues Arg285, His317, and Ser369 each coordinate substrate.

The protein belongs to the RuBisCO large chain family. Type I subfamily. As to quaternary structure, heterohexadecamer of 8 large chains and 8 small chains; disulfide-linked. The disulfide link is formed within the large subunit homodimers. Requires Mg(2+) as cofactor. Post-translationally, the disulfide bond which can form in the large chain dimeric partners within the hexadecamer appears to be associated with oxidative stress and protein turnover.

Its subcellular location is the plastid. It is found in the chloroplast. The catalysed reaction is 2 (2R)-3-phosphoglycerate + 2 H(+) = D-ribulose 1,5-bisphosphate + CO2 + H2O. It carries out the reaction D-ribulose 1,5-bisphosphate + O2 = 2-phosphoglycolate + (2R)-3-phosphoglycerate + 2 H(+). Functionally, ruBisCO catalyzes two reactions: the carboxylation of D-ribulose 1,5-bisphosphate, the primary event in carbon dioxide fixation, as well as the oxidative fragmentation of the pentose substrate in the photorespiration process. Both reactions occur simultaneously and in competition at the same active site. This is Ribulose bisphosphate carboxylase large chain from Parnassia fimbriata (Fringed grass-of-Parnassus).